Reading from the N-terminus, the 527-residue chain is MENDHSSSDEHEHENPELQTRAPKRRRLSETSEDDEYVAAPTPLPTLSRIKKKEPKDENKDTSTGTDNPVLIKDALEMGLQDAGESSFKALNVAPWLIGSLTTMAVRKPTAIQRACIPEILKGRDCIGGSRTGSGKTIAFAVPILQKWAEDPFGIFAVVLTPTRELALQIYEQFKAISAPQSMKPVLITGGTDMRPQALALSQRPHVVIATPGRLADHIQTSGEDTVRGLKRVRMVVLDEADRLLAPGPGSMLPDVETCLSALPPSSERQTLLFTATVTPEVRALKSMPRASTKPPVFVTEIEAGGTTSAGADGAAPKSTLPPTLKQTYLKVPMTHREAFLHVLLSTDGNAGKPAIIFCNHTKTADLLERLLRRLAHRVTSLHSLLPQSERSSNLARFRASAARILVATDVASRGLDIPSVALVVNYDVPRNPDDYVHRVGRTARAGRRGEAVTLVGQRDVQLVLAIEERVGRQMEEWSEEGVSVEGRVVRTGVLKEVGSAKREALIEIEEGRDVLGRKRNKLKKVR.

Residues 1 to 16 (MENDHSSSDEHEHENP) are compositionally biased toward basic and acidic residues. The tract at residues 1 to 70 (MENDHSSSDE…DTSTGTDNPV (70 aa)) is disordered. A Q motif motif is present at residues 86-114 (SSFKALNVAPWLIGSLTTMAVRKPTAIQR). A Helicase ATP-binding domain is found at 117–296 (IPEILKGRDC…SMPRASTKPP (180 aa)). 130–137 (SRTGSGKT) lines the ATP pocket. A DEAD box motif is present at residues 239 to 242 (DEAD). In terms of domain architecture, Helicase C-terminal spans 324–486 (TLKQTYLKVP…EWSEEGVSVE (163 aa)).

Belongs to the DEAD box helicase family. DDX49/DBP8 subfamily.

The protein resides in the nucleus. Its subcellular location is the nucleolus. It catalyses the reaction ATP + H2O = ADP + phosphate + H(+). Its function is as follows. ATP-binding RNA helicase involved in 40S ribosomal subunit biogenesis and is required for the normal formation of 18S rRNAs through pre-rRNA processing at A0, A1 and A2 sites. Required for vegetative growth. In Aspergillus terreus (strain NIH 2624 / FGSC A1156), this protein is ATP-dependent RNA helicase dbp8 (dbp8).